Here is a 49-residue protein sequence, read N- to C-terminus: uncharacterized protein (49 aa).

This is an uncharacterized protein from Sinorhizobium fredii (strain NBRC 101917 / NGR234).